Consider the following 197-residue polypeptide: ATP-dependent Clp protease proteolytic subunit 1 (197 aa).

The active-site Nucleophile is the Ser96. The active site involves His121.

Belongs to the peptidase S14 family. In terms of assembly, fourteen ClpP subunits assemble into 2 heptameric rings which stack back to back to give a disk-like structure with a central cavity, resembling the structure of eukaryotic proteasomes.

It is found in the cytoplasm. The enzyme catalyses Hydrolysis of proteins to small peptides in the presence of ATP and magnesium. alpha-casein is the usual test substrate. In the absence of ATP, only oligopeptides shorter than five residues are hydrolyzed (such as succinyl-Leu-Tyr-|-NHMec, and Leu-Tyr-Leu-|-Tyr-Trp, in which cleavage of the -Tyr-|-Leu- and -Tyr-|-Trp bonds also occurs).. Cleaves peptides in various proteins in a process that requires ATP hydrolysis. Has a chymotrypsin-like activity. Plays a major role in the degradation of misfolded proteins. The polypeptide is ATP-dependent Clp protease proteolytic subunit 1 (Synechococcus sp. (strain CC9902)).